The primary structure comprises 188 residues: Elongation factor P (188 aa).

It belongs to the elongation factor P family.

It localises to the cytoplasm. The protein operates within protein biosynthesis; polypeptide chain elongation. In terms of biological role, involved in peptide bond synthesis. Stimulates efficient translation and peptide-bond synthesis on native or reconstituted 70S ribosomes in vitro. Probably functions indirectly by altering the affinity of the ribosome for aminoacyl-tRNA, thus increasing their reactivity as acceptors for peptidyl transferase. The protein is Elongation factor P of Caulobacter sp. (strain K31).